Here is a 162-residue protein sequence, read N- to C-terminus: Phosphopantetheine adenylyltransferase (162 aa).

Ser9 provides a ligand contact to substrate. ATP contacts are provided by residues 9 to 10 (SF) and His17. Residues Lys41, Leu73, and Lys87 each coordinate substrate. ATP-binding positions include 88 to 90 (GLR), Glu98, and 123 to 129 (CSFLSSS).

This sequence belongs to the bacterial CoaD family. Homohexamer. Mg(2+) is required as a cofactor.

It localises to the cytoplasm. The catalysed reaction is (R)-4'-phosphopantetheine + ATP + H(+) = 3'-dephospho-CoA + diphosphate. Its pathway is cofactor biosynthesis; coenzyme A biosynthesis; CoA from (R)-pantothenate: step 4/5. Its function is as follows. Reversibly transfers an adenylyl group from ATP to 4'-phosphopantetheine, yielding dephospho-CoA (dPCoA) and pyrophosphate. The polypeptide is Phosphopantetheine adenylyltransferase (Natranaerobius thermophilus (strain ATCC BAA-1301 / DSM 18059 / JW/NM-WN-LF)).